We begin with the raw amino-acid sequence, 536 residues long: ATP synthase subunit alpha, mitochondrial (536 aa).

Residues 1–24 (MFKNALRRAGVAAPRISRVAQRGY) constitute a mitochondrion transit peptide. 195 to 202 (GDRQTGKT) lines the ATP pocket.

As to quaternary structure, F-type ATP synthases have 2 components, the catalytic core F(1) and the membrane-embedded component F(0), linked together by a central stalk and a peripheral stalk. The central stalk, also called rotor shaft, is often seen as part of F(1). The peripheral stalk is seen as part of F(0). F(0) contains the membrane channel next to the rotor. F-type ATP synthases form dimers but each monomer functions independently in ATP generation. The dimer consists of 17 different polypeptides: ATP1 (subunit alpha, 3 molecules per monomer, part of F(1)), ATP2 (subunit beta, 3 copies per monomer, part of F(1)), ATP3 (subunit gamma, part of the central stalk), ATP4 (subunit b, part of the peripheral stalk), ATP5/OSCP (subunit 5/OSCP, part of the peripheral stalk), ATP6 (subunit a, part of the peripheral stalk), ATP7 (subunit d, part of the peripheral stalk), ATP8 (subunit 8, part of the peripheral stalk), OLI1 (subunit c, part of the rotor, 10 molecules per monomer), ATP14 (subunit h, part of the peripheral stalk), ATP15 (subunit epsilon, part of the central stalk), ATP16 (subunit delta, part of the central stalk), ATP17 (subunit f, part of the peripheral stalk), ATP18 (subunit i/j, part of the peripheral stalk), ATP19 (subunit k, dimer-specific, at interface between monomers), ATP20 (subunit g, at interface between monomers), TIM11 (subunit e, at interface between monomers).

The protein resides in the mitochondrion inner membrane. Mitochondrial membrane ATP synthase (F(1)F(0) ATP synthase or Complex V) produces ATP from ADP in the presence of a proton gradient across the membrane which is generated by electron transport complexes of the respiratory chain. F-type ATP synthases consist of two structural domains, F(1) - containing the extramembraneous catalytic core, and F(0) - containing the membrane proton channel, linked together by a central stalk and a peripheral stalk. During catalysis, ATP synthesis in the catalytic domain of F(1) is coupled via a rotary mechanism of the central stalk subunits to proton translocation. Subunits alpha/ATP1 and beta/ATP2 form the catalytic core in F(1). Rotation of the central stalk against the surrounding alpha/ATP1(3)beta/ATP2(3) subunits leads to hydrolysis of ATP in three separate catalytic sites on the beta/ATP2 subunits. Subunit alpha/ATP1 does not bear the catalytic high-affinity ATP-binding sites. This is ATP synthase subunit alpha, mitochondrial from Yarrowia lipolytica (strain CLIB 122 / E 150) (Yeast).